Here is a 346-residue protein sequence, read N- to C-terminus: Annexin A1 (346 aa).

The residue at position 2 (alanine 2) is an N-acetylalanine. Serine 5 bears the Phosphoserine; by TRPM7 mark. Residue glutamine 19 forms an Isoglutamyl lysine isopeptide (Gln-Lys) (interchain with K-?) linkage. Tyrosine 21 is modified (phosphotyrosine; by EGFR). A phosphoserine mark is found at serine 34 and serine 37. A Phosphothreonine modification is found at threonine 41. Annexin repeat units lie at residues 42-113, 114-185, 197-269, and 273-344; these read FNPS…ALLK, TPAQ…SLAK, DLAD…VIVK, and SQPM…ALCG. Lysine 58 bears the N6-acetyllysine mark. Positions 59, 60, 62, 97, 100, 105, 127, 129, 131, 132, and 134 each coordinate Ca(2+). Threonine 136 bears the Phosphothreonine mark. Ca(2+) contacts are provided by aspartate 171, glycine 210, and arginine 213. Lysine 214 participates in a covalent cross-link: Glycyl lysine isopeptide (Lys-Gly) (interchain with G-Cter in SUMO1); alternate. A Glycyl lysine isopeptide (Lys-Gly) (interchain with G-Cter in SUMO2); alternate cross-link involves residue lysine 214. Ca(2+) is bound at residue glycine 215. Position 239 is an N6-acetyllysine (lysine 239). Ca(2+) contacts are provided by aspartate 253, glutamate 255, and leucine 256. Residue lysine 257 forms a Glycyl lysine isopeptide (Lys-Gly) (interchain with G-Cter in SUMO1) linkage. The Ca(2+) site is built by glutamate 261, methionine 286, glycine 288, and glycine 290. Lysine 312 carries the N6-acetyllysine modification. A disulfide bond links cysteine 324 and cysteine 343. Residues leucine 328, glutamate 330, and threonine 331 each contribute to the Ca(2+) site. Residue lysine 332 forms a Glycyl lysine isopeptide (Lys-Gly) (interchain with G-Cter in SUMO1) linkage. Glutamate 336 lines the Ca(2+) pocket.

Belongs to the annexin family. Homodimer; non-covalently linked. Homodimer; linked by transglutamylation. Homodimers linked by transglutamylation are observed in placenta, but not in other tissues. Interacts with S100A11. Heterotetramer, formed by two molecules each of S100A11 and ANXA1. Interacts with DYSF. Interacts with EGFR. Phosphorylated by protein kinase C, EGFR and TRPM7. Phosphorylated in response to EGF treatment. Post-translationally, sumoylated. In terms of processing, proteolytically cleaved by cathepsin CTSG to release the active N-terminal peptide Ac2-26. As to expression, detected on surface epithelia and mucosal glands in nasal cavity, trachea, bronchi and bronchioles. Detected in blood vessel endothelial cells. Detected in neutrophils (at protein level).

Its subcellular location is the nucleus. The protein localises to the cytoplasm. The protein resides in the cell projection. It localises to the cilium. It is found in the basolateral cell membrane. Its subcellular location is the lateral cell membrane. The protein localises to the cell membrane. The protein resides in the apical cell membrane. It localises to the membrane. It is found in the endosome membrane. Its subcellular location is the secreted. The protein localises to the extracellular space. The protein resides in the early endosome. It localises to the cytoplasmic vesicle membrane. It is found in the extracellular exosome. Its subcellular location is the cytoplasmic vesicle. The protein localises to the secretory vesicle lumen. The protein resides in the phagocytic cup. In terms of biological role, plays important roles in the innate immune response as effector of glucocorticoid-mediated responses and regulator of the inflammatory process. Has anti-inflammatory activity. Plays a role in glucocorticoid-mediated down-regulation of the early phase of the inflammatory response. Contributes to the adaptive immune response by enhancing signaling cascades that are triggered by T-cell activation, regulates differentiation and proliferation of activated T-cells. Promotes the differentiation of T-cells into Th1 cells and negatively regulates differentiation into Th2 cells. Has no effect on unstimulated T-cells. Negatively regulates hormone exocytosis via activation of the formyl peptide receptors and reorganization of the actin cytoskeleton. Has high affinity for Ca(2+) and can bind up to eight Ca(2+) ions. Displays Ca(2+)-dependent binding to phospholipid membranes. Plays a role in the formation of phagocytic cups and phagosomes. Plays a role in phagocytosis by mediating the Ca(2+)-dependent interaction between phagosomes and the actin cytoskeleton. Functionally, functions at least in part by activating the formyl peptide receptors and downstream signaling cascades. Promotes chemotaxis of granulocytes and monocytes via activation of the formyl peptide receptors. Promotes rearrangement of the actin cytoskeleton, cell polarization and cell migration. Promotes resolution of inflammation and wound healing. Acts via neutrophil N-formyl peptide receptors to enhance the release of CXCL2. This is Annexin A1 (ANXA1) from Bos taurus (Bovine).